The following is a 728-amino-acid chain: Fibulin-1 (728 aa).

An N-terminal signal peptide occupies residues 1 to 17 (MRICFLLLAFLVAETFA). Disulfide bonds link Cys-23–Cys-49, Cys-24–Cys-56, Cys-37–Cys-57, Cys-66–Cys-94, Cys-79–Cys-95, Cys-97–Cys-121, Cys-98–Cys-128, Cys-111–Cys-129, Cys-159–Cys-168, Cys-164–Cys-178, Cys-180–Cys-279, Cys-285–Cys-298, Cys-292–Cys-307, Cys-347–Cys-359, Cys-353–Cys-368, Cys-375–Cys-388, Cys-394–Cys-404, Cys-399–Cys-413, Cys-415–Cys-428, Cys-434–Cys-448, Cys-442–Cys-457, Cys-459–Cys-472, Cys-478–Cys-489, Cys-485–Cys-498, Cys-500–Cys-513, Cys-519–Cys-534, Cys-530–Cys-543, Cys-545–Cys-558, Cys-564–Cys-576, and Cys-569–Cys-585. 3 Anaphylatoxin-like domains span residues 23 to 64 (CCAG…LLDN), 65 to 96 (ACDS…ECCD), and 97 to 129 (CCLL…NKCC). The EGF-like 1 domain occupies 155–194 (LGDRCASSHCEHLCHDRGGEKVECSCRSGFDLAPDGMACV). The EGF-like 2; calcium-binding domain maps to 195-280 (DRNECLTRQS…GWLFQHGHCV (86 aa)). In terms of domain architecture, EGF-like 3; calcium-binding spans 281–344 (DVDECNLGSH…YPKNGMCNDI (64 aa)). One can recognise an EGF-like 4; calcium-binding domain in the interval 343–389 (DIDECVTGHNCGAGEECVNTPGSFRCQQKGNLCAHGYEVNGATGFCE). An EGF-like 5; calcium-binding domain is found at 390–429 (DVNECQQGVCGSMECINLPGTYKCKCGPGYEFNDAKKRCE). Residues 430-473 (DVDECIKFAGHVCDLSAECINTIGSFECKCKPGFQLASDGRRCE) enclose the EGF-like 6; calcium-binding domain. One can recognise an EGF-like 7; calcium-binding domain in the interval 474–514 (DVNECTTGIAACEQKCVNIPGSYQCICDRGFALGPDGTKCE). The EGF-like 8; calcium-binding domain occupies 515–559 (DIDECSIWAGSGNDLCMGGCINTKGSYLCQCPPGYKIQPDGRTCV). In terms of domain architecture, EGF-like 9; calcium-binding spans 560 to 610 (DVDECAMGECAGSDKVCVNTLGSFKCHSIDCPTNYIHDSLNKNQIADGYSC). A glycan (N-linked (GlcNAc...) asparagine) is linked at Asn-624.

The protein belongs to the fibulin family. As to quaternary structure, homomultimerizes and interacts with various extracellular matrix components. In terms of tissue distribution, expressed in head muscle cells, anterior and posterior intestinal cells. Isoform a: Expressed in male and hermaphrodite gonad, anterior and posterior intestine and pharyngeal basement membranes, body-wall muscle, GLR cells, uterine attachment and mechanosensory neurons. Isoform c: Expressed on ALM/PLM mechanosensory neuron attachments, in flexible tracks connecting the pharyngeal, body-wall-muscle basement membranes and in uterine attachments.

It localises to the secreted. It is found in the extracellular space. The protein resides in the extracellular matrix. The protein localises to the basement membrane. Its function is as follows. Incorporated into fibronectin-containing matrix fibers. Plays a role in cell adhesion and migration along protein fibers within the extracellular matrix (ECM). Important for certain developmental processes and contributes to the supramolecular organization of ECM architecture, in particular to those of basement membranes. In terms of biological role, involved in regulating the shape and adhesion of cells in the developing pharynx, intestine, body-wall muscle and gonadal tissue. During gonadogenesis, regulates the width of gonads and the migration of distal tip cells (DTC). Together with type IV collagen let-2 and downstream of metalloprotease mig-17, recruits nidogen nid-1 to the gonad basement membrane thereby inducing basement membrane remodeling required for the directional migration of DTCs. Acts antagonistically with metalloprotease gon-1 to maintain optimal levels of type IV collagen emb-9 in the gonad basement membrane during gonadogenesis. Required for larval development. Involved in the assembly of the flexible hemicentin-containing tracks found joining the pharynx and body-wall-muscle basement membranes. The chain is Fibulin-1 (fbl-1) from Caenorhabditis elegans.